The sequence spans 148 residues: Large ribosomal subunit protein bL9 (148 aa).

The protein belongs to the bacterial ribosomal protein bL9 family.

In terms of biological role, binds to the 23S rRNA. The chain is Large ribosomal subunit protein bL9 from Geobacter metallireducens (strain ATCC 53774 / DSM 7210 / GS-15).